The chain runs to 542 residues: La-related protein 7 homolog (542 aa).

The HTH La-type RNA-binding domain maps to 112 to 239 (VAEELDIKES…KRRFPFNLEQ (128 aa)). Positions 247–335 (RTLYIDFLPP…GSIRIITYKK (89 aa)) constitute an RRM domain. In terms of domain architecture, xRRM spans 374 to 542 (EIKQNCLIKI…KQNITQNYNK (169 aa)).

The protein belongs to the LARP7 family. Component of the telomerase holoenzyme complex, composed of the catalytic core (the catalytic subunit TERT, the telomerase RNA template component TER and TAP65/p65), which is associated with two heterotrimeric subcomplexes: (i) the replication protein A (RPA)-related subcomplex, composed of TEB1, RPA2/TEB2 and RPA3/TEB3 and (ii) the CST-like subcomplex, composed of TAP75/p75, TAP45/p45 and TAP19/p19. TEB1 and the CST-like subcomplex are tethered to the catalytic core by TAP50/p50.

Its subcellular location is the chromosome. It is found in the telomere. Its function is as follows. RNA-binding protein required for assembly of the holoenzyme telomerase ribonucleoprotein (RNP) complex. Telomerase is an essential ribonucleoprotein enzyme that copies new telomeric repeats onto chromosome ends by repetitively synthesizing the short telomere-repeat sequence 5'-TTGGGG-3' using an RNA template component TER. TAP65/p65 specifically binds telomerase RNA template TER and is required for biogenesis and placement of the TER stem-terminus element: TAP65/p65 first protects the 3'-end of TER from degradation and acts as a chaperone to correctly fold TER for protein binding; it then bends TER stem-loop IV to position it for interaction of stem-loop IV with catalytic TERT RNA-binding domain. The protein is La-related protein 7 homolog of Tetrahymena thermophila (strain SB210).